The primary structure comprises 120 residues: NADH-quinone oxidoreductase subunit A (120 aa).

A run of 3 helical transmembrane segments spans residues 10–30, 65–85, and 89–109; these read ILVF…MGWF, VAIL…WAVV, and IGWF…VGFI.

This sequence belongs to the complex I subunit 3 family. NDH-1 is composed of 14 different subunits. Subunits NuoA, H, J, K, L, M, N constitute the membrane sector of the complex.

Its subcellular location is the cell inner membrane. The catalysed reaction is a quinone + NADH + 5 H(+)(in) = a quinol + NAD(+) + 4 H(+)(out). NDH-1 shuttles electrons from NADH, via FMN and iron-sulfur (Fe-S) centers, to quinones in the respiratory chain. The immediate electron acceptor for the enzyme in this species is believed to be ubiquinone. Couples the redox reaction to proton translocation (for every two electrons transferred, four hydrogen ions are translocated across the cytoplasmic membrane), and thus conserves the redox energy in a proton gradient. The polypeptide is NADH-quinone oxidoreductase subunit A (Coxiella burnetii (strain Dugway 5J108-111)).